The following is a 438-amino-acid chain: DNA primase DnaG (438 aa).

One can recognise a Toprim domain in the interval 169–243 (DSIIVVEGRA…DIDYVARAPY (75 aa)). Residues E175, D217, and D219 each coordinate Mg(2+).

It belongs to the archaeal DnaG primase family. Forms a ternary complex with MCM helicase and DNA. Mg(2+) serves as cofactor.

It catalyses the reaction ssDNA + n NTP = ssDNA/pppN(pN)n-1 hybrid + (n-1) diphosphate.. Its function is as follows. RNA polymerase that catalyzes the synthesis of short RNA molecules used as primers for DNA polymerase during DNA replication. The protein is DNA primase DnaG of Methanococcus maripaludis (strain C6 / ATCC BAA-1332).